Here is a 523-residue protein sequence, read N- to C-terminus: ATP synthase subunit alpha (523 aa).

Residue 173–180 (GDRQTGKT) coordinates ATP.

The protein belongs to the ATPase alpha/beta chains family. In terms of assembly, F-type ATPases have 2 components, CF(1) - the catalytic core - and CF(0) - the membrane proton channel. CF(1) has five subunits: alpha(3), beta(3), gamma(1), delta(1), epsilon(1). CF(0) has three main subunits: a(1), b(2) and c(9-12). The alpha and beta chains form an alternating ring which encloses part of the gamma chain. CF(1) is attached to CF(0) by a central stalk formed by the gamma and epsilon chains, while a peripheral stalk is formed by the delta and b chains.

Its subcellular location is the cell membrane. The enzyme catalyses ATP + H2O + 4 H(+)(in) = ADP + phosphate + 5 H(+)(out). Produces ATP from ADP in the presence of a proton gradient across the membrane. The alpha chain is a regulatory subunit. The sequence is that of ATP synthase subunit alpha from Streptomyces griseus subsp. griseus (strain JCM 4626 / CBS 651.72 / NBRC 13350 / KCC S-0626 / ISP 5235).